A 156-amino-acid chain; its full sequence is Oleosin Zm-I (156 aa).

The tract at residues 1–30 is disordered; sequence MADHHRGATGGGGGYGDLQRGGGMHGEAQQ. Residue alanine 2 is modified to N-acetylalanine. The tract at residues 2–42 is polar; it reads ADHHRGATGGGGGYGDLQRGGGMHGEAQQQQKQGAMMTALK. The span at 8-25 shows a compositional bias: gly residues; it reads ATGGGGGYGDLQRGGGMH. A hydrophobic region spans residues 43–114; the sequence is AATAATFGGS…AALSVFSWMY (72 aa). Helical transmembrane passes span 51–71 and 95–115; these read GSMLVLSGLILAGTVIALTVA and GFVTSGGLGVAALSVFSWMYK.

It belongs to the oleosin family. In terms of processing, the N-terminus is blocked.

It localises to the lipid droplet. Its subcellular location is the membrane. Its function is as follows. May have a structural role to stabilize the lipid body during desiccation of the seed by preventing coalescence of the oil. Probably interacts with both lipid and phospholipid moieties of lipid bodies. May also provide recognition signals for specific lipase anchorage in lipolysis during seedling growth. The chain is Oleosin Zm-I (OLE16) from Zea mays (Maize).